Here is a 164-residue protein sequence, read N- to C-terminus: Phosphopantetheine adenylyltransferase (164 aa).

Ser9 serves as a coordination point for substrate. ATP-binding positions include 9-10 and His17; that span reads SF. 3 residues coordinate substrate: Lys41, Leu73, and Lys87. Residues 88-90, Glu98, and 123-129 each bind ATP; these read GLR and HSFLSSS.

This sequence belongs to the bacterial CoaD family. In terms of assembly, homohexamer. Mg(2+) serves as cofactor.

It is found in the cytoplasm. It catalyses the reaction (R)-4'-phosphopantetheine + ATP + H(+) = 3'-dephospho-CoA + diphosphate. The protein operates within cofactor biosynthesis; coenzyme A biosynthesis; CoA from (R)-pantothenate: step 4/5. Reversibly transfers an adenylyl group from ATP to 4'-phosphopantetheine, yielding dephospho-CoA (dPCoA) and pyrophosphate. This is Phosphopantetheine adenylyltransferase from Rubrobacter xylanophilus (strain DSM 9941 / JCM 11954 / NBRC 16129 / PRD-1).